Consider the following 674-residue polypeptide: DNA-directed RNA polymerase subunit beta' (674 aa).

Zn(2+) is bound by residues C69, C71, C87, and C90. D494, D496, and D498 together coordinate Mg(2+).

Belongs to the RNA polymerase beta' chain family. RpoC1 subfamily. As to quaternary structure, in plastids the minimal PEP RNA polymerase catalytic core is composed of four subunits: alpha, beta, beta', and beta''. When a (nuclear-encoded) sigma factor is associated with the core the holoenzyme is formed, which can initiate transcription. Mg(2+) is required as a cofactor. Zn(2+) serves as cofactor.

It is found in the plastid. It localises to the chloroplast. The catalysed reaction is RNA(n) + a ribonucleoside 5'-triphosphate = RNA(n+1) + diphosphate. Its function is as follows. DNA-dependent RNA polymerase catalyzes the transcription of DNA into RNA using the four ribonucleoside triphosphates as substrates. This chain is DNA-directed RNA polymerase subunit beta', found in Psilotum nudum (Whisk fern).